The primary structure comprises 229 residues: Ribonuclease S-6 (229 aa).

Residues 1 to 27 (MGITGMIYMVPMVFSLIVLISCSSTMG) form the signal peptide. Gln36 is a binding site for RNA. Cysteines 42 and 49 form a disulfide. Residue His60 participates in RNA binding. The active-site Proton donor is His60. Cys75 and Cys119 are disulfide-bonded. Residues Asn77 and Asn87 are each glycosylated (N-linked (GlcNAc) asparagine). Residues 98 to 99 (NV), Phe108, 111 to 112 (RQ), and 115 to 116 (KH) contribute to the RNA site. Gln112 is a catalytic residue. His116 functions as the Proton acceptor in the catalytic mechanism. Asn145 is a glycosylation site (N-linked (GlcNAc...) (high mannose) asparagine). 2 disulfides stabilise this stretch: Cys184–Cys222 and Cys199–Cys210. The N-linked (GlcNAc) asparagine; alternate glycan is linked to Asn188. N-linked (GlcNAc...) asparagine; alternate glycans are attached at residues Asn188 and Asn203.

The protein belongs to the RNase T2 family. The N-glycans attached at Asn-188 and Asn-203 consist of either monosaccharide (GlcNAc) or disaccharide (GlcNAc-GlcNAc) that could not be distinguished.

The enzyme catalyses a ribonucleotidyl-ribonucleotide-RNA + H2O = a 3'-end 3'-phospho-ribonucleotide-RNA + a 5'-end dephospho-ribonucleoside-RNA + H(+). Its function is as follows. Self-incompatibility (SI) is the inherited ability of a flowering plant to prevent self-fertilization by discriminating between self and non-self pollen during pollination. In many species, self-incompatibility is controlled by the single, multiallelic locus S. This chain is Ribonuclease S-6, found in Pyrus pyrifolia (Chinese pear).